The chain runs to 581 residues: mRNA-decapping enzyme 1B (581 aa).

Phosphoserine is present on Ser145. 2 disordered regions span residues 181 to 222 (QISS…PEPQ) and 236 to 258 (APCQ…PEKF). Residues 204-219 (GSRQQRGPRPGQTSDP) are compositionally biased toward polar residues. A compositionally biased stretch (low complexity) spans 244 to 255 (PPQTLPLQQQQP). Residues Ser269 and Ser326 each carry the phosphoserine modification. Residues 349–411 (AENRCEPGAP…HQPVTGPGEV (63 aa)) are disordered. The segment covering 355-367 (PGAPAPASSATTP) has biased composition (low complexity). Thr366 carries the phosphothreonine modification. A compositionally biased stretch (polar residues) spans 368 to 381 (VSLAQPTRLSSALP). The span at 382 to 401 (PQTPGPRALPRPAPPGPGPG) shows a compositional bias: pro residues. Position 412 is a phosphoserine (Ser412). Residues 427-468 (QQLPAPGRPALAAKFPTATLSTRARNPLEPWRDPPPSTEQPA) form a disordered region. Residue Ser475 is modified to Phosphoserine. A disordered region spans residues 498 to 522 (SWAPPQERSRAPLPPGNQDPAATPT).

The protein belongs to the DCP1 family. Interacts with DCP1A.

It localises to the cytoplasm. It is found in the nucleus. It catalyses the reaction a 5'-end (N(7)-methyl 5'-triphosphoguanosine)-ribonucleoside in mRNA + H2O = N(7)-methyl-GDP + a 5'-end phospho-ribonucleoside in mRNA + 2 H(+). May play a role in the degradation of mRNAs, both in normal mRNA turnover and in nonsense-mediated mRNA decay. May remove the 7-methyl guanine cap structure from mRNA molecules, yielding a 5'-phosphorylated mRNA fragment and 7m-GDP. The protein is mRNA-decapping enzyme 1B (DCP1B) of Bos taurus (Bovine).